A 701-amino-acid chain; its full sequence is MARKTPIVRYRNIGICAHVDAGKTTTTERVLFYTGLSHKIGEVHDGAATMDWMEQEQERGITITSAATTCFWSGMQQQFPQHRINIIDTPGHVDFTIEVERSLRVLDGAVVVLCGSSGVQPQTETVWRQANKYEVPRLVFVNKMDRAGANFRSVVQQLRDRLGANAVPLHMTIGAEDGFEGVIDLIKMKSIHWNEADMGMTFEYGEVPEDLLEECEEMREYAVEAAAEANDDLMEKYLETGELSEDEIKAGLRARTLANEIVPVLGGSAFKNKGVQAVLDAVVEYLPAPTEVKAIEGTLIDGETVDTRVADDDAPFAALAFKIATDPFVGTLTFFRVYSGRLESGTAVYNSVKQKRERVGRMVQMHSNNREEIKEVLAGDIAAAIGLKDVTTGDTLCAESNKIVLERMEFPEPVISVAVEPRTVPDQEKMAVALAKLAQEDPSFRVATDEETGQTIISGMGELHLDIIVDRMRREFGVDANIGKPQVAYRERITRTCEVEGKFVRQSGGRGQYGHVWIRFEPADDNNAEGLVFENEVVGGAVPKEYIPAVEKGISEQMRNGVLAGYPLLGLKATIYDGSFHDVDSNEMAFKIAASIATKNLAAEGGAVLLEPVMKVEVVTPEENMGDVVGDLNRRRGLIQGMEECISGKVVRAEVPLAEMFGYATDLRSATQGRATFTMEFQQYSEAPKNVADEIMARNGR.

The region spanning valine 8–threonine 290 is the tr-type G domain. GTP is bound by residues alanine 17–threonine 24, aspartate 88–histidine 92, and asparagine 142–aspartate 145.

The protein belongs to the TRAFAC class translation factor GTPase superfamily. Classic translation factor GTPase family. EF-G/EF-2 subfamily.

The protein localises to the cytoplasm. Its function is as follows. Catalyzes the GTP-dependent ribosomal translocation step during translation elongation. During this step, the ribosome changes from the pre-translocational (PRE) to the post-translocational (POST) state as the newly formed A-site-bound peptidyl-tRNA and P-site-bound deacylated tRNA move to the P and E sites, respectively. Catalyzes the coordinated movement of the two tRNA molecules, the mRNA and conformational changes in the ribosome. This Saccharophagus degradans (strain 2-40 / ATCC 43961 / DSM 17024) protein is Elongation factor G 1.